A 205-amino-acid polypeptide reads, in one-letter code: Transcription antitermination protein NusB (205 aa).

The protein belongs to the NusB family.

Involved in transcription antitermination. Required for transcription of ribosomal RNA (rRNA) genes. Binds specifically to the boxA antiterminator sequence of the ribosomal RNA (rrn) operons. The sequence is that of Transcription antitermination protein NusB from Acaryochloris marina (strain MBIC 11017).